The following is a 532-amino-acid chain: MAPSSPRPALPALLVLLGALFPGPGNAQTSVSPSKVILPRGGSVLVTCSTSCDQPKLLGIETPLPKKELLLPGNNRKVYELSNVQEDSQPMCYSNCPDGQSTAKTFLTVYWTPERVELAPLPSWQPVGKNLTLRCQVEGGAPRANLTVVLLRGEKELKREPAVGEPAEVTTTVLVRRDHHGANFSCRTELDLRPQGLELFENTSAPYQLQTFVLPATPPQLVSPRVLEVDTQGTVVCSLDGLFPVSEAQVHLALGDQRLNPTVTYGNDSFSAKASVSVTAEDEGTQRLTCAVILGNQSQETLQTVTIYSFPAPNVILTKPEVSEGTEVTVKCEAHPRAKVTLNGVPAQPLGPRAQLLLKATPEDNGRSFSCSATLEVAGQLIHKNQTRELRVLYGPRLDERDCPGNWTWPENSQQTPMCQAWGNPLPELKCLKDGTFPLPIGESVTVTRDLEGTYLCRARSTQGEVTRKVTVNVLSPRYEIVIITVVAAAVIMGTAGLSTYLYNRQRKIKKYRLQQAQKGTPMKPNTQATPP.

The signal sequence occupies residues 1–27; the sequence is MAPSSPRPALPALLVLLGALFPGPGNA. The Extracellular portion of the chain corresponds to 28–480; sequence QTSVSPSKVI…TVNVLSPRYE (453 aa). 2 Ig-like C2-type domains span residues 41–103 and 128–193; these read GGSV…QSTA and GKNL…LDLR. Intrachain disulfides connect Cys-48-Cys-92 and Cys-52-Cys-96. The N-linked (GlcNAc...) asparagine glycan is linked to Asn-130. Cysteines 135 and 186 form a disulfide. The N-linked (GlcNAc...) (complex) asparagine glycan is linked to Asn-145. A Cell attachment site; atypical motif is present at residues 152–154; sequence RGE. Residues Asn-183, Asn-202, Asn-267, and Asn-296 are each glycosylated (N-linked (GlcNAc...) asparagine). 2 Ig-like C2-type domains span residues 230-297 and 325-378; these read DTQG…LGNQ and GTEV…LEVA. Cys-237 and Cys-290 are oxidised to a cystine. A disulfide bond links Cys-332 and Cys-371. N-linked (GlcNAc...) asparagine glycosylation is found at Asn-385 and Asn-406. 2 disulfide bridges follow: Cys-403-Cys-419 and Cys-431-Cys-457. The region spanning 412–464 is the Ig-like C2-type 5 domain; that stretch reads NSQQTPMCQAWGNPLPELKCLKDGTFPLPIGESVTVTRDLEGTYLCRARSTQG. A helical membrane pass occupies residues 481-503; sequence IVIITVVAAAVIMGTAGLSTYLY. The Cytoplasmic segment spans residues 504 to 532; it reads NRQRKIKKYRLQQAQKGTPMKPNTQATPP. A phosphothreonine mark is found at Thr-521 and Thr-530.

This sequence belongs to the immunoglobulin superfamily. ICAM family. Homodimer. Interacts with MUC1 and promotes cell aggregation in epithelial cells. Interacts with ARHGEF26/SGEF. Interacts (on T cell side) with CD81, CD247 and CD9 at immunological synapses between antigen-presenting cells and T cells. In terms of assembly, (Microbial infection) Interacts with major receptor group rhinovirus A-B capsid proteins. As to quaternary structure, (Microbial infection) Interacts with Coxsackievirus A21 capsid proteins. Post-translationally, monoubiquitinated, which is promoted by MARCH9 and leads to endocytosis.

The protein resides in the membrane. ICAM proteins are ligands for the leukocyte adhesion protein LFA-1 (integrin alpha-L/beta-2). During leukocyte trans-endothelial migration, ICAM1 engagement promotes the assembly of endothelial apical cups through ARHGEF26/SGEF and RHOG activation. In terms of biological role, (Microbial infection) Acts as a receptor for major receptor group rhinovirus A-B capsid proteins. Functionally, (Microbial infection) Acts as a receptor for Coxsackievirus A21 capsid proteins. Its function is as follows. (Microbial infection) Upon Kaposi's sarcoma-associated herpesvirus/HHV-8 infection, is degraded by viral E3 ubiquitin ligase MIR2, presumably to prevent lysis of infected cells by cytotoxic T-lymphocytes and NK cell. The protein is Intercellular adhesion molecule 1 (ICAM1) of Homo sapiens (Human).